We begin with the raw amino-acid sequence, 864 residues long: Ribosome biogenesis protein ERB1 (864 aa).

Residues 1-52 (MAVDKGRRPVPPERRAQGRKRAEPGDVTIRETRTRPVHTPEPEPELLAKDGI) are compositionally biased toward basic and acidic residues. Disordered stretches follow at residues 1-153 (MAVD…VKEG) and 191-231 (ESRN…STED). The segment covering 53-71 (LELEDDDDNDDDDDDDDDD) has biased composition (acidic residues). Residues 72–83 (KSNHHDGAPKNE) are compositionally biased toward basic and acidic residues. A compositionally biased stretch (acidic residues) spans 100-135 (DDGDEDEEEDDEDEDEDASDDEAFDSDDLENWDEEA). WD repeat units follow at residues 509–549 (AHAP…CVAT), 559–599 (ADRS…KTMY), 694–732 (NSAM…LVKT), 735–774 (PGVR…RPYK), 778–817 (YHSR…DLLQ), and 833–864 (QDAL…LWTP).

Belongs to the WD repeat BOP1/ERB1 family. As to quaternary structure, component of the NOP7 complex, composed of ERB1, NOP7 and YTM1. The complex is held together by ERB1, which interacts with NOP7 via its N-terminal domain and with YTM1 via a high-affinity interaction between the seven-bladed beta-propeller domains of the 2 proteins. The NOP7 complex associates with the 66S pre-ribosome.

The protein localises to the nucleus. The protein resides in the nucleolus. Its subcellular location is the nucleoplasm. Its function is as follows. Component of the NOP7 complex, which is required for maturation of the 25S and 5.8S ribosomal RNAs and formation of the 60S ribosome. The protein is Ribosome biogenesis protein ERB1 of Malassezia globosa (strain ATCC MYA-4612 / CBS 7966) (Dandruff-associated fungus).